Consider the following 269-residue polypeptide: Glutamate racemase (269 aa).

Substrate is bound by residues 7 to 8 and 39 to 40; these read DS and YG. C70 acts as the Proton donor/acceptor in catalysis. 71–72 serves as a coordination point for substrate; the sequence is NT. Residue C194 is the Proton donor/acceptor of the active site. Residue 195 to 196 coordinates substrate; the sequence is TH.

The protein belongs to the aspartate/glutamate racemases family.

The enzyme catalyses L-glutamate = D-glutamate. It functions in the pathway cell wall biogenesis; peptidoglycan biosynthesis. Provides the (R)-glutamate required for cell wall biosynthesis. The sequence is that of Glutamate racemase from Ruegeria sp. (strain TM1040) (Silicibacter sp.).